Consider the following 56-residue polypeptide: Large ribosomal subunit protein bL32 (56 aa).

Residues 1-34 (MAVQQNKPTRSKRGMRRSHDALTTSTVSVDKASG) form a disordered region.

This sequence belongs to the bacterial ribosomal protein bL32 family.

This Sodalis glossinidius (strain morsitans) protein is Large ribosomal subunit protein bL32.